Reading from the N-terminus, the 580-residue chain is Protein O-linked-mannose beta-1,4-N-acetylglucosaminyltransferase 2 (580 aa).

Residues 1–4 (MHLS) are Cytoplasmic-facing. A helical; Signal-anchor for type II membrane protein transmembrane segment spans residues 5–25 (AVLNALLVSVLAAVLWKHVRL). At 26-580 (REHAAALEEE…PFADVLVCNT (555 aa)) the chain is on the lumenal side. 2 N-linked (GlcNAc...) asparagine glycosylation sites follow: asparagine 99 and asparagine 276. In terms of domain architecture, Fibronectin type-III spans 488 to 580 (ARCQASVQGA…PFADVLVCNT (93 aa)).

This sequence belongs to the glycosyltransferase 61 family.

The protein resides in the endoplasmic reticulum membrane. It catalyses the reaction 3-O-(alpha-D-mannosyl)-L-threonyl-[protein] + UDP-N-acetyl-alpha-D-glucosamine = 3-O-(N-acetyl-beta-D-glucosaminyl-(1-&gt;4)-alpha-D-mannosyl)-L-threonyl-[protein] + UDP + H(+). It functions in the pathway protein modification; protein glycosylation. Functionally, O-linked mannose beta-1,4-N-acetylglucosaminyltransferase that transfers UDP-N-acetyl-D-glucosamine to the 4-position of the mannose to generate N-acetyl-D-glucosamine-beta-1,4-O-D-mannosylprotein. Involved in the biosynthesis of the phosphorylated O-mannosyl trisaccharide (N-acetylgalactosamine-beta-3-N-acetylglucosamine-beta-4-(phosphate-6-)mannose), a carbohydrate structure present in alpha-dystroglycan (DAG1), which is required for binding laminin G-like domain-containing extracellular proteins with high affinity. This is Protein O-linked-mannose beta-1,4-N-acetylglucosaminyltransferase 2 (POMGNT2) from Canis lupus familiaris (Dog).